A 256-amino-acid polypeptide reads, in one-letter code: Imidazole glycerol phosphate synthase subunit HisF (256 aa).

Catalysis depends on residues Asp-12 and Asp-131.

The protein belongs to the HisA/HisF family. Heterodimer of HisH and HisF.

The protein resides in the cytoplasm. It catalyses the reaction 5-[(5-phospho-1-deoxy-D-ribulos-1-ylimino)methylamino]-1-(5-phospho-beta-D-ribosyl)imidazole-4-carboxamide + L-glutamine = D-erythro-1-(imidazol-4-yl)glycerol 3-phosphate + 5-amino-1-(5-phospho-beta-D-ribosyl)imidazole-4-carboxamide + L-glutamate + H(+). The protein operates within amino-acid biosynthesis; L-histidine biosynthesis; L-histidine from 5-phospho-alpha-D-ribose 1-diphosphate: step 5/9. IGPS catalyzes the conversion of PRFAR and glutamine to IGP, AICAR and glutamate. The HisF subunit catalyzes the cyclization activity that produces IGP and AICAR from PRFAR using the ammonia provided by the HisH subunit. The protein is Imidazole glycerol phosphate synthase subunit HisF of Pseudomonas fluorescens (strain SBW25).